A 211-amino-acid polypeptide reads, in one-letter code: 3-demethoxyubiquinol 3-hydroxylase (211 aa).

Fe cation is bound by residues Glu60, Glu90, His93, Glu142, Glu174, and His177.

The protein belongs to the COQ7 family. Fe cation is required as a cofactor.

It localises to the cell membrane. It carries out the reaction a 5-methoxy-2-methyl-3-(all-trans-polyprenyl)benzene-1,4-diol + AH2 + O2 = a 3-demethylubiquinol + A + H2O. It functions in the pathway cofactor biosynthesis; ubiquinone biosynthesis. Its function is as follows. Catalyzes the hydroxylation of 2-nonaprenyl-3-methyl-6-methoxy-1,4-benzoquinol during ubiquinone biosynthesis. This Acinetobacter baumannii (strain AB307-0294) protein is 3-demethoxyubiquinol 3-hydroxylase.